The chain runs to 310 residues: L-lactate dehydrogenase (310 aa).

Residues 10–11 (MV), Asp-32, Tyr-62, and 76–77 (GV) contribute to the NAD(+) site. Residues Gln-79, Arg-85, and 117-120 (NPVD) each bind substrate. NAD(+) is bound by residues 115–117 (ATN) and Ser-140. 145 to 148 (DTAR) serves as a coordination point for substrate. Residues Arg-150 and His-165 each contribute to the beta-D-fructose 1,6-bisphosphate site. Catalysis depends on His-172, which acts as the Proton acceptor. A Phosphotyrosine modification is found at Tyr-218. Thr-227 contacts substrate.

The protein belongs to the LDH/MDH superfamily. LDH family. In terms of assembly, homotetramer.

It is found in the cytoplasm. It catalyses the reaction (S)-lactate + NAD(+) = pyruvate + NADH + H(+). Its pathway is fermentation; pyruvate fermentation to lactate; (S)-lactate from pyruvate: step 1/1. Its activity is regulated as follows. Allosterically activated by fructose 1,6-bisphosphate (FBP). In terms of biological role, catalyzes the conversion of lactate to pyruvate. This is L-lactate dehydrogenase from Thermus thermophilus (strain ATCC 27634 / DSM 579 / HB8).